Reading from the N-terminus, the 459-residue chain is tRNA modification GTPase MnmE (459 aa).

3 residues coordinate (6S)-5-formyl-5,6,7,8-tetrahydrofolate: Arg22, Glu85, and Arg124. The 160-residue stretch at 221-380 folds into the TrmE-type G domain; sequence GLSTVIVGKP…LELQIRDLFF (160 aa). K(+) is bound at residue Asn231. GTP-binding positions include 231–236, 250–256, and 275–278; these read NVGKSS, TEVAGTT, and DTAG. Ser235 is a binding site for Mg(2+). K(+)-binding residues include Thr250, Val252, and Thr255. Position 256 (Thr256) interacts with Mg(2+). Lys459 lines the (6S)-5-formyl-5,6,7,8-tetrahydrofolate pocket.

This sequence belongs to the TRAFAC class TrmE-Era-EngA-EngB-Septin-like GTPase superfamily. TrmE GTPase family. As to quaternary structure, homodimer. Heterotetramer of two MnmE and two MnmG subunits. The cofactor is K(+).

It localises to the cytoplasm. Functionally, exhibits a very high intrinsic GTPase hydrolysis rate. Involved in the addition of a carboxymethylaminomethyl (cmnm) group at the wobble position (U34) of certain tRNAs, forming tRNA-cmnm(5)s(2)U34. The protein is tRNA modification GTPase MnmE of Staphylococcus haemolyticus (strain JCSC1435).